A 739-amino-acid polypeptide reads, in one-letter code: Catalase-peroxidase (739 aa).

Positions 1-23 are cleaved as a signal peptide; the sequence is MLKKIVTALGMSGMLLASNSAIA. The segment at residues 100–221 is a cross-link (tryptophyl-tyrosyl-methioninium (Trp-Tyr) (with M-247)); that stretch reads WHDAGTYRIY…YAATQMGLIY (122 aa). The active-site Proton acceptor is the H101. The segment at residues 221–247 is a cross-link (tryptophyl-tyrosyl-methioninium (Tyr-Met) (with W-100)); that stretch reads YVNPEGPDGKPDIKGAASEIRQAFRAM. Residue H262 participates in heme b binding.

This sequence belongs to the peroxidase family. Peroxidase/catalase subfamily. In terms of assembly, homodimer or homotetramer. The cofactor is heme b. Formation of the three residue Trp-Tyr-Met cross-link is important for the catalase, but not the peroxidase activity of the enzyme.

The catalysed reaction is H2O2 + AH2 = A + 2 H2O. It carries out the reaction 2 H2O2 = O2 + 2 H2O. In terms of biological role, bifunctional enzyme with both catalase and broad-spectrum peroxidase activity. This is Catalase-peroxidase from Francisella tularensis subsp. novicida (strain U112).